We begin with the raw amino-acid sequence, 465 residues long: Cruciform DNA-recognizing protein 1 (465 aa).

Disordered regions lie at residues 107-227 (EAGG…VPNP) and 247-276 (RLNK…ALPQ). Residues 127–151 (NRKKNKRNNKKRRSKLKKKSTKNNK) are compositionally biased toward basic residues. Phosphoserine occurs at positions 153 and 156. Over residues 156–165 (SLDDNEEEDG) the composition is skewed to acidic residues. The segment at 160-161 (NE) is X-DNA-binding. Residues 166-177 (VTGTTTEDVTGT) show a composition bias toward low complexity. Residue T182 is modified to Phosphothreonine. S271 carries the phosphoserine modification. T295 is modified (phosphothreonine). Positions 300–465 (AVTPLINEPE…FFGKLKKLFK (166 aa)) are disordered. Phosphoserine occurs at positions 319 and 343. The span at 337 to 363 (LVEKRESTEGVLDGSKKVENKAKKDEE) shows a compositional bias: basic and acidic residues. At T366 the chain carries Phosphothreonine. Composition is skewed to basic and acidic residues over residues 385 to 398 (AEGR…EEKE) and 404 to 428 (EKGS…EVKK). S394 is modified (phosphoserine). S440 carries the post-translational modification Phosphoserine. A compositionally biased stretch (basic residues) spans 451-465 (KKKTGFFGKLKKLFK).

This sequence belongs to the CRP1/MDG1 family. Post-translationally, cleaved in the vicinity of position 160 to give an X-DNA-binding N-terminal subpeptide and a non-DNA-binding C-terminal subpeptide.

Functionally, cruciform DNA-binding protein which exerts an enhancing effect on the cleavage of cruciform DNA (X-DNA) by endonuclease VII from bacteriophage T4. This Saccharomyces cerevisiae (strain ATCC 204508 / S288c) (Baker's yeast) protein is Cruciform DNA-recognizing protein 1 (CRP1).